A 377-amino-acid polypeptide reads, in one-letter code: Flagellin D (377 aa).

A coiled-coil region spans residues 104-128; sequence NSKADRVAIQEEVTALNDELNRIAE.

The protein belongs to the bacterial flagellin family. As to quaternary structure, heteromer of multiple flagellin subunits including FlaA, FlaB, FlaC, FlaD and possibly FlaE.

It is found in the secreted. Its subcellular location is the bacterial flagellum. Functionally, flagellin is the subunit protein which polymerizes to form the filaments of bacterial flagella. FlaD is not essential for flagellar synthesis and motility. May have a role in virulence unrelated to motility. In Vibrio anguillarum (Listonella anguillarum), this protein is Flagellin D (flaD).